A 398-amino-acid polypeptide reads, in one-letter code: Elongation factor Tu (398 aa).

The tr-type G domain maps to K10–E207. Positions G19–T26 are G1. Position 19–26 (G19–T26) interacts with GTP. T26 contributes to the Mg(2+) binding site. A G2 region spans residues G63–N67. Positions D84–G87 are G3. GTP-binding positions include D84–H88 and N139–D142. A G4 region spans residues N139 to D142. The tract at residues S177–L179 is G5.

It belongs to the TRAFAC class translation factor GTPase superfamily. Classic translation factor GTPase family. EF-Tu/EF-1A subfamily. As to quaternary structure, monomer.

Its subcellular location is the cytoplasm. The catalysed reaction is GTP + H2O = GDP + phosphate + H(+). Functionally, GTP hydrolase that promotes the GTP-dependent binding of aminoacyl-tRNA to the A-site of ribosomes during protein biosynthesis. This chain is Elongation factor Tu, found in Streptococcus equi subsp. zooepidemicus (strain MGCS10565).